The following is a 390-amino-acid chain: Ribonuclease D (390 aa).

The 3'-5' exonuclease domain occupies 7–173; that stretch reads ITDSATLAAL…TLFPMLLKEL (167 aa). The region spanning 212–293 is the HRDC domain; it reads KADILGRLKA…ENAEALRPEE (82 aa).

It belongs to the RNase D family. A divalent metal cation serves as cofactor.

It localises to the cytoplasm. The catalysed reaction is Exonucleolytic cleavage that removes extra residues from the 3'-terminus of tRNA to produce 5'-mononucleotides.. Its function is as follows. Exonuclease involved in the 3' processing of various precursor tRNAs. Initiates hydrolysis at the 3'-terminus of an RNA molecule and releases 5'-mononucleotides. The chain is Ribonuclease D from Zymomonas mobilis subsp. mobilis (strain ATCC 31821 / ZM4 / CP4).